We begin with the raw amino-acid sequence, 106 residues long: Large ribosomal subunit protein uL24 (106 aa).

It belongs to the universal ribosomal protein uL24 family. As to quaternary structure, part of the 50S ribosomal subunit.

Functionally, one of two assembly initiator proteins, it binds directly to the 5'-end of the 23S rRNA, where it nucleates assembly of the 50S subunit. One of the proteins that surrounds the polypeptide exit tunnel on the outside of the subunit. The sequence is that of Large ribosomal subunit protein uL24 from Paracidovorax citrulli (strain AAC00-1) (Acidovorax citrulli).